A 294-amino-acid polypeptide reads, in one-letter code: MANLKDIKRKIGSVKNTQKTTRAMKLVSTAKLRRTEELAKRTKYFEDAINATLRQIASSIKKYKVGGIKGRYFEEPEAVAVVDIIFITADKGLCGGFNYQTIKTVRSLLEEYQSKGAKVRLRAVGKKGIEFFNFQGYELNDSVVGLSSSPNYEEAKNYILKSVGDFLEGKTDKVILIHNGYKNMITQEMKAIQLLPIDISKYTEEVDGSMLEMEPDESEKVLESLLNKYIEFNMYYALIDSLAAEHSARMQAMDAATNNAKEMVRSLTISYNKARQESITTELIEIISGMEAMK.

This sequence belongs to the ATPase gamma chain family. As to quaternary structure, F-type ATPases have 2 components, CF(1) - the catalytic core - and CF(0) - the membrane proton channel. CF(1) has five subunits: alpha(3), beta(3), gamma(1), delta(1), epsilon(1). CF(0) has three main subunits: a, b and c.

It is found in the cell inner membrane. Produces ATP from ADP in the presence of a proton gradient across the membrane. The gamma chain is believed to be important in regulating ATPase activity and the flow of protons through the CF(0) complex. The polypeptide is ATP synthase gamma chain (Nitratiruptor sp. (strain SB155-2)).